Consider the following 306-residue polypeptide: Porphobilinogen deaminase (306 aa).

The residue at position 234 (Cys234) is an S-(dipyrrolylmethanemethyl)cysteine.

This sequence belongs to the HMBS family. As to quaternary structure, monomer. Dipyrromethane is required as a cofactor.

The enzyme catalyses 4 porphobilinogen + H2O = hydroxymethylbilane + 4 NH4(+). It functions in the pathway porphyrin-containing compound metabolism; protoporphyrin-IX biosynthesis; coproporphyrinogen-III from 5-aminolevulinate: step 2/4. Tetrapolymerization of the monopyrrole PBG into the hydroxymethylbilane pre-uroporphyrinogen in several discrete steps. The chain is Porphobilinogen deaminase from Mycobacteroides abscessus (strain ATCC 19977 / DSM 44196 / CCUG 20993 / CIP 104536 / JCM 13569 / NCTC 13031 / TMC 1543 / L948) (Mycobacterium abscessus).